The sequence spans 62 residues: Alpha-conotoxin Vt1.27 (62 aa).

A signal peptide spans 1-21; that stretch reads MGMRMMFTVFLLVVLATTVVS. Positions 22–40 are excised as a propeptide; that stretch reads FTLDRASDGASAAADLVAR. Cystine bridges form between Cys-46-Cys-52 and Cys-47-Cys-61.

Belongs to the conotoxin A superfamily. As to expression, expressed by the venom duct.

The protein resides in the secreted. The short (45-61) amidated synthetic peptide inhibits the rat neuronal alpha-3-beta-2/CHRNA3-CHRNB2 nicotinic acetylcholine receptor (nAChR) (IC(50)=1.16 uM). It also inhibits Cav2.2/CACNA1C voltage-gated calcium channel (IC(50)=398 nM). In vivo, when tested in rat pain models, this short amidated peptide increases the pain threshold. The chain is Alpha-conotoxin Vt1.27 from Conus planorbis (Planorbis cone).